The primary structure comprises 300 residues: Protoheme IX farnesyltransferase 1 (300 aa).

The next 8 helical transmembrane spans lie at 26 to 46, 48 to 68, 97 to 117, 120 to 140, 148 to 168, 174 to 194, 226 to 246, and 280 to 300; these read VVVLMLITSLVGMFLATRAGV, WTVLVFGNLGIALCAGGAAAV, AALAFALLLALAGQALLLTFT, LTAWLTLASLLGYAVVYTGFL, IVIGGLAGAAPPLLGWVAATG, PLLLVLIIFAWTPPHFWALAI, FALLAVSLLPYVIHMSGVLYL, and IYYLFLLFIALLVDHYLLLNL.

It belongs to the UbiA prenyltransferase family. Protoheme IX farnesyltransferase subfamily.

It localises to the cell inner membrane. It carries out the reaction heme b + (2E,6E)-farnesyl diphosphate + H2O = Fe(II)-heme o + diphosphate. It functions in the pathway porphyrin-containing compound metabolism; heme O biosynthesis; heme O from protoheme: step 1/1. Its function is as follows. Converts heme B (protoheme IX) to heme O by substitution of the vinyl group on carbon 2 of heme B porphyrin ring with a hydroxyethyl farnesyl side group. This chain is Protoheme IX farnesyltransferase 1, found in Pseudomonas fluorescens (strain ATCC BAA-477 / NRRL B-23932 / Pf-5).